Here is a 207-residue protein sequence, read N- to C-terminus: uncharacterized protein (207 aa).

It belongs to the flavoredoxin family. FMN serves as cofactor.

This is an uncharacterized protein from Bacillus subtilis (strain 168).